Reading from the N-terminus, the 121-residue chain is Basic phospholipase A2 homolog GodMT-II (121 aa).

7 disulfide bridges follow: C26–C115, C28–C44, C43–C95, C49–C121, C50–C88, C57–C81, and C75–C86. Positions 105–117 are important for membrane-damaging activities in eukaryotes and bacteria; heparin-binding; the sequence is KNYKIYPKPLCKK.

Belongs to the phospholipase A2 family. Group II subfamily. K49 sub-subfamily. Monomer. Expressed by the venom gland.

Its subcellular location is the secreted. Functionally, snake venom phospholipase A2 homolog that lacks enzymatic activity but shows high myotoxic activities. In vivo, induces a mild edema when subcutaneously injected into mice foot pad. In Cerrophidion godmani (Porthidium godmani), this protein is Basic phospholipase A2 homolog GodMT-II.